The primary structure comprises 23 residues: Phallacidin proprotein 1 (23 aa).

Residue P1 is a propeptide. Positions 2–8 (AWLVDCP) form a cross-link, cyclopeptide (Ala-Pro). The 2'-cysteinyl-6'-hydroxytryptophan sulfoxide (Trp-Cys) cross-link spans 3–7 (WLVDC). The propeptide occupies 9-23 (CVGDDINRLLTRGEK).

The protein belongs to the MSDIN fungal toxin family. In terms of processing, processed by the macrocyclase-peptidase enzyme POPB to yield a toxic cyclic heptapeptide. POPB first removes 10 residues from the N-terminus. Conformational trapping of the remaining peptide forces the enzyme to release this intermediate rather than proceed to macrocyclization. The enzyme rebinds the remaining peptide in a different conformation and catalyzes macrocyclization of the N-terminal 7 residues.

In terms of biological role, major toxin that belongs to the bicyclic heptapeptides called phallotoxins. Although structurally related to amatoxins, phallotoxins have a different mode of action, which is the stabilization of F-actin. Phallotoxins are poisonous when administered parenterally, but not orally because of poor absorption. The sequence is that of Phallacidin proprotein 1 from Amanita phalloides (Death cap).